The chain runs to 473 residues: BPI fold-containing family B member 3 (473 aa).

The first 20 residues, 1–20, serve as a signal peptide directing secretion; the sequence is MMLGVYTLLLLWGLATPCLG. N-linked (GlcNAc...) asparagine glycosylation occurs at Asn139. Cysteines 161 and 196 form a disulfide.

The protein belongs to the BPI/LBP/Plunc superfamily. BPI/LBP family.

The protein localises to the secreted. Its function is as follows. May have the capacity to recognize and bind specific classes of odorants. May act as a carrier molecule, transporting odorants across the mucus layer to access receptor sites. May serve as a primary defense mechanism by recognizing and removing potentially harmful odorants or pathogenic microorganisms from the mucosa or clearing excess odorant from mucus to enable new odorant stimuli to be received. This is BPI fold-containing family B member 3 from Mus musculus (Mouse).